Here is a 297-residue protein sequence, read N- to C-terminus: Calponin-1 (297 aa).

A Calponin-homology (CH) domain is found at 28–131 (HQREQELREW…STLLALASMA (104 aa)). Calponin-like repeat units lie at residues 164-189 (IGLQ…RHLY), 204-229 (ISLQ…RQIF), and 243-268 (VSLQ…RQVY). Thr-170 is modified (phosphothreonine; by ROCK2). Residue Ser-175 is modified to Phosphoserine; by ROCK2. Phosphothreonine; by ROCK2 occurs at positions 180 and 184. A Phosphothreonine; by ROCK2 modification is found at Thr-259.

The protein belongs to the calponin family.

In terms of biological role, thin filament-associated protein that is implicated in the regulation and modulation of smooth muscle contraction. It is capable of binding to actin, calmodulin and tropomyosin. The interaction of calponin with actin inhibits the actomyosin Mg-ATPase activity. This chain is Calponin-1 (CNN1), found in Bos taurus (Bovine).